Here is a 338-residue protein sequence, read N- to C-terminus: Glyceraldehyde-3-phosphate dehydrogenase (338 aa).

NAD(+) is bound by residues Arg-12–Ile-13, Asp-38, and Ser-125. D-glyceraldehyde 3-phosphate is bound by residues Ser-155–Thr-157, Thr-186, Thr-216–Gly-217, and Arg-239. Cys-156 (nucleophile) is an active-site residue. An NAD(+)-binding site is contributed by Asn-320.

It belongs to the glyceraldehyde-3-phosphate dehydrogenase family. In terms of assembly, homotetramer.

It localises to the cytoplasm. It catalyses the reaction D-glyceraldehyde 3-phosphate + phosphate + NAD(+) = (2R)-3-phospho-glyceroyl phosphate + NADH + H(+). Its pathway is carbohydrate degradation; glycolysis; pyruvate from D-glyceraldehyde 3-phosphate: step 1/5. Its function is as follows. Catalyzes the oxidative phosphorylation of glyceraldehyde 3-phosphate (G3P) to 1,3-bisphosphoglycerate (BPG) using the cofactor NAD. The first reaction step involves the formation of a hemiacetal intermediate between G3P and a cysteine residue, and this hemiacetal intermediate is then oxidized to a thioester, with concomitant reduction of NAD to NADH. The reduced NADH is then exchanged with the second NAD, and the thioester is attacked by a nucleophilic inorganic phosphate to produce BPG. In Lactobacillus delbrueckii subsp. bulgaricus, this protein is Glyceraldehyde-3-phosphate dehydrogenase (gap).